Here is a 64-residue protein sequence, read N- to C-terminus: Prokaryotic ubiquitin-like protein Pup (64 aa).

Composition is skewed to basic and acidic residues over residues 1 to 11 and 25 to 34; these read MAQEQTKRTGG and GQERREKLAE. A disordered region spans residues 1–38; the sequence is MAQEQTKRTGGGDEDEGSAGPEAAGQERREKLAEDTDD. The ARC ATPase binding stretch occupies residues 21–58; sequence PEAAGQERREKLAEDTDDLLDEIDDVLEENAEDFVRAY. The stretch at 24-52 forms a coiled coil; it reads AGQERREKLAEDTDDLLDEIDDVLEENAE. Gln-64 is modified (deamidated glutamine). Residue Gln-64 forms an Isoglutamyl lysine isopeptide (Gln-Lys) (interchain with K-? in acceptor proteins) linkage.

It belongs to the prokaryotic ubiquitin-like protein family. Strongly interacts with the proteasome-associated ATPase ARC through a hydrophobic interface; the interacting region of Pup lies in its C-terminal half. There is one Pup binding site per ARC hexamer ring. Is modified by deamidation of its C-terminal glutamine to glutamate by the deamidase Dop, a prerequisite to the subsequent pupylation process.

Its pathway is protein degradation; proteasomal Pup-dependent pathway. Functionally, protein modifier that is covalently attached to lysine residues of substrate proteins, thereby targeting them for proteasomal degradation. The tagging system is termed pupylation. In Nocardia farcinica (strain IFM 10152), this protein is Prokaryotic ubiquitin-like protein Pup.